We begin with the raw amino-acid sequence, 732 residues long: Inducible ornithine decarboxylase (732 aa).

Lys-355 carries the post-translational modification N6-(pyridoxal phosphate)lysine.

Belongs to the Orn/Lys/Arg decarboxylase class-I family. Requires pyridoxal 5'-phosphate as cofactor.

The enzyme catalyses L-ornithine + H(+) = putrescine + CO2. The protein operates within amine and polyamine biosynthesis; putrescine biosynthesis via L-ornithine pathway; putrescine from L-ornithine: step 1/1. The first enzyme leading to putrescine and thus polyamine synthesis. The sequence is that of Inducible ornithine decarboxylase from Escherichia coli (strain K12).